The sequence spans 340 residues: Flap endonuclease 1 (340 aa).

The segment at 1-98 (MGVPIGEIIP…KELEKRREAR (98 aa)) is N-domain. The Mg(2+) site is built by aspartate 27, aspartate 80, glutamate 152, glutamate 154, aspartate 173, aspartate 175, and aspartate 236. The interval 116 to 258 (EARKYAQRAT…KALEIVRHSK (143 aa)) is I-domain. Residues 330-338 (KQSTLESWF) form an interaction with PCNA region.

Belongs to the XPG/RAD2 endonuclease family. FEN1 subfamily. Interacts with PCNA. PCNA stimulates the nuclease activity without altering cleavage specificity. Mg(2+) is required as a cofactor.

Its function is as follows. Structure-specific nuclease with 5'-flap endonuclease and 5'-3' exonuclease activities involved in DNA replication and repair. During DNA replication, cleaves the 5'-overhanging flap structure that is generated by displacement synthesis when DNA polymerase encounters the 5'-end of a downstream Okazaki fragment. Binds the unpaired 3'-DNA end and kinks the DNA to facilitate 5' cleavage specificity. Cleaves one nucleotide into the double-stranded DNA from the junction in flap DNA, leaving a nick for ligation. Also involved in the base excision repair (BER) pathway. Acts as a genome stabilization factor that prevents flaps from equilibrating into structures that lead to duplications and deletions. Also possesses 5'-3' exonuclease activity on nicked or gapped double-stranded DNA. This is Flap endonuclease 1 from Pyrococcus furiosus (strain ATCC 43587 / DSM 3638 / JCM 8422 / Vc1).